A 551-amino-acid chain; its full sequence is Cation/acetate symporter ActP (551 aa).

14 helical membrane passes run 8 to 28, 35 to 55, 78 to 98, 105 to 125, 151 to 171, 185 to 205, 208 to 228, 264 to 284, 305 to 325, 357 to 377, 406 to 426, 430 to 450, 465 to 485, and 496 to 516; these read ALAATLLPLGAHAADAITGAV, WQAIVMFLIFVALTLYITYWA, GLAIAGDFMSAASFLGISALV, GLIYSLGFLVGWPIILFLIAE, LSACGSLVVVALYLIAQMVGA, VAVVLVGVLMVLYVLFGGMLA, WVQIIKAVLLLCGASFMAFMV, ISALSLGLGLMFGTAGLPHIL, GFMGYFYILTFIIGFGAIMLV, LFLGFISAVAFATILAVVAGL, VSKITVLILGVVAILLGILFE, IAFMVGLAFSIAASCNFPIIL, VGGWLGLLTAVILMILGPTIW, and FPYEYPALFSIAIAFIGIWVF.

This sequence belongs to the sodium:solute symporter (SSF) (TC 2.A.21) family.

The protein resides in the cell inner membrane. Functionally, transports acetate. This is Cation/acetate symporter ActP from Klebsiella pneumoniae (strain 342).